Consider the following 205-residue polypeptide: Inactive ribonuclease-like protein 9 (205 aa).

The first 24 residues, 1–24, serve as a signal peptide directing secretion; sequence MMLITTHSLLLLLLLLQLLQPLQF. 3 cysteine pairs are disulfide-bonded: Cys97–Cys152, Cys115–Cys167, and Cys122–Cys129. 2 N-linked (GlcNAc...) asparagine glycosylation sites follow: Asn130 and Asn142.

It belongs to the pancreatic ribonuclease family.

It is found in the secreted. Its function is as follows. Does not exhibit any ribonuclease activity. The sequence is that of Inactive ribonuclease-like protein 9 (RNASE9) from Cebus capucinus (White-faced sapajou).